A 1954-amino-acid chain; its full sequence is MNKLFYLFILIASLFILTDASHFRFGTISWQPTTDYRTIKFTSNFAYRTTFFYSSTSSIKVGNLVNVGTLNFGSGVGSVTVSVTVTDFDVKNNWFTGTFTTTKAYPAQNSGTIREYTAIFTSCCRISSLLNNKDASWNITTSVQIDNKNELSMVNWSPVSGMIPIVQVVANKNNNFRVIASDQNVQNADSSALTFSFSKVYTMTQPSGMTIDSKGNCYFLPTQIGLYSTQIYILDSRGAYIVVDFILQSVAEPGTCDPTCSNAGTACNQNSQCKGCTNSGSTTIDTCTTSNYPPDFVSPPTPDDGDTKLFPIGASTSLTFSCKTIMSGRSTTIQTANLPVGVTTKTPVTGATSNTTITWTPTTANTGSYVVSLVCSDSTGLTSSVRSFTILVAKPDCGNGGYTESGVCKCVDNWDPASKCFECKDGYYGENCVAVPPCVNGVPNSGINGDGKCLCSNGWTGADCSISSSQSCKDLSNSNTSISYSNPSFVNPTKVQVYLTSTPNYEVPTIVSIPNPINNLDVYVLVDANLASTTAFGYIKSGMSTFVSNIENICETAQFGIGYFSDYTPSPISFSPSQVMGSPIAAAIGLYKPATYSTTSNGNSLLAATDAASASVGWNSGSFKVIVIITDSDHSSSSAQITAFTNKFIGKSIVPVVVSFGASSMTNWNSALTSAGFGSVVTASGTSASDWSAKANTGVKNVLSKIVYKSDPTATGSSFVSSVPSTVTVSSSSSTQQTVNGLKLSLPSGTTIVSPVATISAMGYGQTDISINYNRPPVATSGSFSVNQNSLATFKLTGTDPDANILQFKFTTFLTANAGVITDSNGKDVSKQQSNYYAASEIFTYTPFENYLASNTIRFVAFDGCVESNTYATISITINKVNQLPECSSISSTITTTLNTQSTFSMTATDFEDASPFLQFTKPTDLTAYGTFTYKGASITSSTKITTGDSVIFTQTVNPKNDATVTLEFRAIDTSNAFSQASCSVSFKIQHANVAPVSSSTSPISVIPRGSVSLTLVSTDSDSTKALFTITAIKNGNNGNFYTCSTNDCSCTSGSSDSTIISLKDQFSGISYSSTKANKLICFTNGEPSAISNYASISFTSTDDEGLESNTVSVVVNIVGDRANVAPVVTKIQDYSVYQDYLDSDAHVVTGTDADIDDYNPPNVNNLIAIITTPPSNGILVTVQNGNNVATQGNAPFTHYYRPNPGFKGTDSYSYQVMDTFKETSSVESTTVTVNPINHKPTLTVNSYSFTSQSGAGETQTLVTYDFDGDNVLCSVQAAPKQISMYDSENELITTLPKSLSSNSYSFKLLDASKISPTPFSSFSDSFIISCKDDSKLTTPYGVLSTGNVTGFVQFTYINTPPTTKGIQVELDQDTTEPFTFNGTDIESPSDLKAKIYALPANGQLLNGNVVLTSKLIGEETYELDALSYKPNAGLSNWNTIDNIGPLDSIPYSVVDQQGLVSDSDVVTFSVRPRNPPVYTGADVIDVLQNTRYPLNVQGKVGNGGSEVNIQVLKFSGRGTLSIAHSMGSEGTMDTEITSYPNSQTGSTSYNFAYMPPHNEYGNDFDFIEFKLFDGDLYSELYTITVNVIHVNQPPTIQLISYKVLDDTSKDNGEVLFDSTYIVNMNINTSVLIKYTGSDVDVDQVTPLLSTVTTALRGTLYTKDETVPDLKGSIIDRNHTTVEQSSDGYYYVVYSPVPDSSGNSYVRIPFFMTDNGGLDSPTLTAVINVNRYNIPPFVLAGNKTYSTTTKLALSVENVQFDDPDSGKSNNVSIVVSIVGENDENVASLEDIKISLKRMQNCELHTSLASISCLDTKSALNESIQTITVNAVTAGNYRLKLFVDDLGYNAPSAIRAQSHMNATGYVDVTFEEAETTTQTNDNKTVLTGAIAGAAAGTALIAAAAWRLLRKAAPPTDTFFSEAAFLGDGVSSNPLYEQSASAAENPLYQSASDTTD.

The N-terminal stretch at 1 to 20 (MNKLFYLFILIASLFILTDA) is a signal peptide. Topologically, residues 21–1883 (SHFRFGTISW…TTTQTNDNKT (1863 aa)) are extracellular. 2 N-linked (GlcNAc...) asparagine glycosylation sites follow: N138 and N354. The EGF-like domain maps to 428-465 (YGENCVAVPPCVNGVPNSGINGDGKCLCSNGWTGADCS). 2 cysteine pairs are disulfide-bonded: C438-C453 and C455-C464. N-linked (GlcNAc...) asparagine glycosylation occurs at N479. Positions 521 to 706 (DVYVLVDANL…TGVKNVLSKI (186 aa)) constitute a VWFA domain. 9 N-linked (GlcNAc...) asparagine glycosylation sites follow: N1348, N1382, N1628, N1678, N1742, N1770, N1820, N1860, and N1881. Residues 1884–1904 (VLTGAIAGAAAGTALIAAAAW) traverse the membrane as a helical segment. The Cytoplasmic portion of the chain corresponds to 1905-1954 (RLLRKAAPPTDTFFSEAAFLGDGVSSNPLYEQSASAAENPLYQSASDTTD).

Belongs to the SIB family. As to quaternary structure, interacts with talA/talin.

The protein resides in the membrane. Functionally, implicated in cellular adhesion. The protein is Integrin beta-like protein C (sibC) of Dictyostelium discoideum (Social amoeba).